A 380-amino-acid chain; its full sequence is MKNEMLALILAGGQGTRLAKLTQSIAKPAVQFGGRYRIIDFALSNCANSGIHNVGVVTQYQPLALNNHIGNGSSWGLDGIDSGVSILQPYSASEGNRWFEGTSHAIYQNIDYIDSVNPEYVLILSGDHIYKMDYDDMLQSHKDNNASLTVAVLDVPLKEASRFGIMNTDANNRIVEFEEKPAQPKSTKASMGIYIFDWQRLRNMLVAAEKSKVGMSDFGKNVIPNYLELGESVYAYEFSGYWKDVGTIESLWEANMEYISPENALDSRNRQWKIYSRNLISPPNFLGANAHVEDSLVVDGCFVDGTVKHSILSTGAQVREGAEVLDSVIMSGAIIGQGAKIKRAIIGEGAIISDGVEIDGTDEVQVVGYNEVVGVATDED.

Alpha-D-glucose 1-phosphate-binding positions include glycine 164, 179 to 180, and serine 190; that span reads EK.

The protein belongs to the bacterial/plant glucose-1-phosphate adenylyltransferase family. As to quaternary structure, homotetramer.

It carries out the reaction alpha-D-glucose 1-phosphate + ATP + H(+) = ADP-alpha-D-glucose + diphosphate. Its pathway is glycan biosynthesis; glycogen biosynthesis. In terms of biological role, involved in the biosynthesis of ADP-glucose, a building block required for the elongation reactions to produce glycogen. Catalyzes the reaction between ATP and alpha-D-glucose 1-phosphate (G1P) to produce pyrophosphate and ADP-Glc. The protein is Glucose-1-phosphate adenylyltransferase of Streptococcus pneumoniae (strain CGSP14).